A 202-amino-acid chain; its full sequence is Thymidylate kinase (202 aa).

7-14 (GIDGSGKT) provides a ligand contact to ATP.

Belongs to the thymidylate kinase family.

It carries out the reaction dTMP + ATP = dTDP + ADP. In terms of biological role, phosphorylation of dTMP to form dTDP in both de novo and salvage pathways of dTTP synthesis. The polypeptide is Thymidylate kinase (Ehrlichia canis (strain Jake)).